A 336-amino-acid chain; its full sequence is MANQKKVTNKTPKKPSVNFDRTKFYTIEEAVNLAKQTSNAKFLSSIDIAIKLNLDTSKSDQQLRGTVSLPYFFGKEKRILVLDKGLTQKDAKSLGVNHAGDSELIAEISKGWLDFDLIITTPKMMPELSKLGKILGTRGLMPNPKNGNVTTDLPKTIAEFKKGINQYRTDSYGNIHMVVGKANADTAKIVENINFLLSFIAAKRLTSVKGIFIEKVNLSSTMGPGIRVLVNKTAVVKKTAKGKVIADDSAKGENKKPAYLIQRVKYAQKKKPSKHPENPPVITEAKKKKVKKILKKAKPAKKAAVAKKPVVVNKKTATKKSPAKKGDVKKAKTSKK.

A large ribosomal subunit protein uL1 region spans residues 1–245 (MANQKKVTNK…VKKTAKGKVI (245 aa)). The segment at 246–336 (ADDSAKGENK…DVKKAKTSKK (91 aa)) is unknown. The tract at residues 267–336 (AQKKKPSKHP…DVKKAKTSKK (70 aa)) is disordered. Residues 286-305 (KKKKVKKILKKAKPAKKAAV) are compositionally biased toward basic residues. Residues 306-315 (AKKPVVVNKK) show a composition bias toward low complexity.

The protein belongs to the universal ribosomal protein uL1 family. In terms of assembly, part of the 50S ribosomal subunit.

In terms of biological role, binds directly to 23S rRNA. The L1 stalk is quite mobile in the ribosome, and is involved in E site tRNA release. Its function is as follows. Protein L1 is also a translational repressor protein, it controls the translation of the L11 operon by binding to its mRNA. This is Large ribosomal subunit protein uL1 from Malacoplasma penetrans (strain HF-2) (Mycoplasma penetrans).